The primary structure comprises 97 residues: Citrate lyase acyl carrier protein (97 aa).

Position 14 is an O-(phosphoribosyl dephospho-coenzyme A)serine (Ser14).

Belongs to the CitD family. Oligomer with a subunit composition of (alpha,beta,gamma)6.

The protein resides in the cytoplasm. Functionally, covalent carrier of the coenzyme of citrate lyase. The sequence is that of Citrate lyase acyl carrier protein from Lactobacillus helveticus (strain DPC 4571).